A 157-amino-acid polypeptide reads, in one-letter code: Protein FAM162B (157 aa).

A helical membrane pass occupies residues alanine 104 to alanine 123.

It belongs to the UPF0389 family.

It localises to the membrane. This is Protein FAM162B (Fam162b) from Mus musculus (Mouse).